The sequence spans 435 residues: MSETPIVSNHDLGKYVDQKVVIQGWVHGIRGSNARQFLSLRNSGKILQVLAEKEILGEEVFQTVKHLRQETSVTVIGNLVKNEKSPIGFELVMESIQIVGESENYPITPKEHGIDFLISQRHLWLRSSKQLAILRVRDSLSFAIRKYFHERDFLLIDTPILTGSVGESAGTLFSTEYFDLGNAYLAQTGQLYLETAIFAHNKVFCYGPTFRAEKSKTRRHLTEFWMVEAEVAFATHAENLKLQEDFVKTVIKETVQNSFQDLKVLERDPAPLLAYLEKDFPVIDYTKALEILQSKGEDIVWGDDINSEREQLLTVEFGGPVFIQKYPREAKAFYMKVNPEDPRTVLNADLIAPDGVGEIIGGSEREENYENIVQRLKEEKLPVESYDWYLDLRKYGSVPHSGFGLGSERLIAWICGLAHVRECIPFPRMMERLYP.

Belongs to the class-II aminoacyl-tRNA synthetase family. In terms of assembly, homodimer.

It is found in the cytoplasm. It carries out the reaction tRNA(Asn) + L-asparagine + ATP = L-asparaginyl-tRNA(Asn) + AMP + diphosphate + H(+). The chain is Asparagine--tRNA ligase from Leptospira interrogans serogroup Icterohaemorrhagiae serovar Lai (strain 56601).